The primary structure comprises 1406 residues: MKDLLKFLKAQTKTEEFDAIKIALASPDMIRSWSFGEVKKPETINYRTFKPERDGLFCARIFGPVKDYECLCGKYKRLKHRGVICEKCGVEVTQTKVRRERMGHIELASPTAHIWFLKSLPSRIGLLLDMPLRDIERVLYFESYVVIEGGMTNLERRQILTEEQYLDALEEFGDEFDAKMGAEAIQALLKNMDLEAECEILREELNETNSETKRKKLTKRIKLLEAFVQSGNKPEWMILTVLPVLPPDLRPLVPLDGGRFATSDLNDLYRRVINRNNRLKRLLDLAAPDIIVRNEKRMLQEAVDALLDNGRRGRAITGSNKRPLKSLADMIKGKQGRFRQNLLGKRVDYSGRSVITVGPYLRLHQCGLPKKMALELFKPFIYGKLELRGLATTIKAAKKMVEREEAVVWDILDEVIREHPVLLNRAPTLHRLGIQAFEPVLIEGKAIQLHPLVCAAYNADFDGDQMAVHVPLTLEAQLEARALMMSTNNILSPANGEPIIVPSQDVVLGLYYMTRDCVNAKGEGMVLTGPKEAERIYRAGLASLHARVKVRITEEIRNTEGESTSRTSIIDTTVGRAILWMIVPKGLPYSIVNQPLGKKAISKMLNTCYRILGLKPTVIFADQIMYTGFAYAARSGASVGIDDMVIPEAKAGIIEEAETEVAEIQEQFQSGLVTAGERYNKVIDIWAAANERVAKAMMDNLSVEDVVNRDGVVEQQVSFNSIFMMADSGARGSAAQIRQLAGMRGLMAKPDGSIIETPITANFREGLNVLQYFISTHGARKGLADTALKTANSGYLTRRLVDVAQDLVVTEDDCGTHNGIVMTPVIEGGDVKEPLRDRVLGRVTAEEVIKPGTADILVPRNTLLDEKWCDLLEENSVDSVKVRSVVSCETDFGVCANCYGRDLARGHIINKGEAVGVIAAQSIGEPGTQLTMRTFHIGGAASRAAAESSIQVKNKGSLKLSNVKFVTNAAGKLVITSRNTELKLIDEFGRTKESYKVPYGAVMAKGDGAEVQGGETVANWDPHIMPVVTEVSGFIRFADMIDGQTITRQTDELTGLSSLVVLDSAERTGSGKDLRPALKIVDAKGDDVLIPGTDMPAQYFLPGKAIVQLEDGIQIGAGDTLARIPQESSGTKDITGGLPRVADLFEARRPKEPAILAEISGIISFGKETKGKRRLVISPLDGSDAYEEMIPKWRQLNVFEGEIVERGDVVSDGPESPHDILRLRGVHAVTRYITNEVQEVYRLQGVKINDKHIEVIVRQMLRKGTIVDAGSTDFLEGEQAEMSRVKIANRKLAAEGKIEATFTRDLLGITKASLATESFISAASFQETTRVLTEAAVAGKRDELRGLKENVIVGRLIPAGTGYAYHQDRMRRKAQGEAPVVPQVSADEATANLAELLNAGFGNSKD.

4 residues coordinate Zn(2+): Cys-70, Cys-72, Cys-85, and Cys-88. Residues Asp-460, Asp-462, and Asp-464 each coordinate Mg(2+). Residues Cys-814, Cys-888, Cys-895, and Cys-898 each coordinate Zn(2+).

It belongs to the RNA polymerase beta' chain family. As to quaternary structure, the RNAP catalytic core consists of 2 alpha, 1 beta, 1 beta' and 1 omega subunit. When a sigma factor is associated with the core the holoenzyme is formed, which can initiate transcription. The cofactor is Mg(2+). Requires Zn(2+) as cofactor.

It carries out the reaction RNA(n) + a ribonucleoside 5'-triphosphate = RNA(n+1) + diphosphate. Functionally, DNA-dependent RNA polymerase catalyzes the transcription of DNA into RNA using the four ribonucleoside triphosphates as substrates. This Yersinia enterocolitica serotype O:8 / biotype 1B (strain NCTC 13174 / 8081) protein is DNA-directed RNA polymerase subunit beta'.